A 157-amino-acid polypeptide reads, in one-letter code: Phosphopantetheine adenylyltransferase (157 aa).

Ser9 is a binding site for substrate. Residues 9–10 (SF) and His17 contribute to the ATP site. The substrate site is built by Lys41, Leu73, and Lys87. ATP is bound by residues 88 to 90 (GLR), Glu98, and 123 to 129 (YSYLSSS).

It belongs to the bacterial CoaD family. As to quaternary structure, homohexamer. Requires Mg(2+) as cofactor.

It is found in the cytoplasm. The catalysed reaction is (R)-4'-phosphopantetheine + ATP + H(+) = 3'-dephospho-CoA + diphosphate. It participates in cofactor biosynthesis; coenzyme A biosynthesis; CoA from (R)-pantothenate: step 4/5. Reversibly transfers an adenylyl group from ATP to 4'-phosphopantetheine, yielding dephospho-CoA (dPCoA) and pyrophosphate. In Alkaliphilus metalliredigens (strain QYMF), this protein is Phosphopantetheine adenylyltransferase.